The primary structure comprises 618 residues: D-glucuronyl C5-epimerase (618 aa).

The Cytoplasmic segment spans residues 1–11 (MRCLAARVNYK). Residues 12 to 29 (TLIIICALFTLVTVLLWN) form a helical; Signal-anchor for type II membrane protein membrane-spanning segment. At 30-618 (KCSSDKAIQF…YLKGSRAKHN (589 aa)) the chain is on the lumenal side. Residues Y180, 185–187 (RDR), Q202, Y210, Q213, and Q216 contribute to the substrate site. The Ca(2+) site is built by T238, E240, T269, N270, and D393. Substrate contacts are provided by residues 430-433 (KLGE), 500-501 (EY), N511, Y515, Y561, R564, and 573-582 (NLARWDYHTT).

The protein belongs to the D-glucuronyl C5-epimerase family. In terms of assembly, homodimer. Interacts with HS2ST1. In terms of tissue distribution, widely expressed with highest levels in lung and lowest levels in spleen.

It localises to the golgi apparatus membrane. The enzyme catalyses [heparosan-N-sulfate](n) = [heparan-N-sulfate](n). It functions in the pathway glycan metabolism; heparan sulfate biosynthesis. The protein operates within glycan metabolism; heparin biosynthesis. Functionally, converts D-glucuronic acid residues adjacent to N-sulfate sugar residues to L-iduronic acid residues, both in maturing heparan sulfate (HS) and heparin chains. This is important for further modifications that determine the specificity of interactions between these glycosaminoglycans and proteins. The chain is D-glucuronyl C5-epimerase (Glce) from Mus musculus (Mouse).